The sequence spans 237 residues: tRNA1(Val) (adenine(37)-N6)-methyltransferase (237 aa).

The protein belongs to the methyltransferase superfamily. tRNA (adenine-N(6)-)-methyltransferase family.

Its subcellular location is the cytoplasm. It catalyses the reaction adenosine(37) in tRNA1(Val) + S-adenosyl-L-methionine = N(6)-methyladenosine(37) in tRNA1(Val) + S-adenosyl-L-homocysteine + H(+). Its function is as follows. Specifically methylates the adenine in position 37 of tRNA(1)(Val) (anticodon cmo5UAC). This chain is tRNA1(Val) (adenine(37)-N6)-methyltransferase, found in Bacteroides fragilis (strain ATCC 25285 / DSM 2151 / CCUG 4856 / JCM 11019 / LMG 10263 / NCTC 9343 / Onslow / VPI 2553 / EN-2).